Consider the following 170-residue polypeptide: Urease accessory protein UreE (170 aa).

The protein belongs to the UreE family.

It is found in the cytoplasm. Involved in urease metallocenter assembly. Binds nickel. Probably functions as a nickel donor during metallocenter assembly. This chain is Urease accessory protein UreE, found in Helicobacter pylori (strain G27).